A 251-amino-acid polypeptide reads, in one-letter code: Transmembrane ascorbate-dependent reductase CYB561 (251 aa).

Met-1 carries the N-acetylmethionine modification. Over 1-16 (MEGGAAASTPAALPYY) the chain is Cytoplasmic. The helical transmembrane segment at 17–37 (VAFSQLLGLTLVAMTGAWLGL) threads the bilayer. In terms of domain architecture, Cytochrome b561 spans 19 to 220 (FSQLLGLTLV…FGGAVLYILT (202 aa)). At 38–51 (YRGGIAWESDLQFN) the chain is on the vesicular side. A helical membrane pass occupies residues 52–72 (AHPLCMVIGLIFLQGDALLVY). 3 residues coordinate heme b: His-53, Arg-73, and Lys-80. Residues 73 to 85 (RVFRNEAKRTTKV) are Cytoplasmic-facing. L-ascorbate-binding residues include Lys-80 and Lys-84. The helical transmembrane segment at 86–106 (LHGLLHIFALVIALVGLVAVF) threads the bilayer. Heme b is bound by residues His-87, 116 to 119 (DLYS), and His-121. Residues 107 to 124 (DYHRKEGYADLYSLHSWC) are Vesicular-facing. A helical transmembrane segment spans residues 125 to 145 (GILVFVLYFVQWLVGFSFFLF). At 146–158 (PGASFSLRSRYRP) the chain is on the cytoplasmic side. Arg-153 lines the L-ascorbate pocket. Residues 159 to 179 (QHIFFGATIFLLSVGTALLGL) form a helical membrane-spanning segment. Heme b is bound by residues His-160 and Glu-181. The Vesicular portion of the chain corresponds to 180 to 198 (KEALLFKLRDKYSAFEPEG). A helical membrane pass occupies residues 199–219 (VLANVLGLLLACFGGAVLYIL). At 220–251 (TRADWKRPSQAEEQALSMDFKTLTEGDSPGSQ) the chain is on the cytoplasmic side. Lys-225 serves as a coordination point for heme b. Ser-247 carries the post-translational modification Phosphoserine.

Requires heme b as cofactor.

Its subcellular location is the cytoplasmic vesicle. The protein resides in the secretory vesicle. It localises to the chromaffin granule membrane. The enzyme catalyses monodehydro-L-ascorbate radical(out) + L-ascorbate(in) = monodehydro-L-ascorbate radical(in) + L-ascorbate(out). Its function is as follows. Transmembrane reductase that uses ascorbate as an electron donor in the cytoplasm and transfers electrons across membranes to reduce monodehydro-L-ascorbate radical in the lumen of secretory vesicles. It is therefore involved the regeneration and homeostasis within secretory vesicles of ascorbate which in turn provides reducing equivalents needed to support the activity of intravesicular enzymes. This Pongo abelii (Sumatran orangutan) protein is Transmembrane ascorbate-dependent reductase CYB561 (CYB561).